Reading from the N-terminus, the 678-residue chain is DNA ligase (678 aa).

NAD(+)-binding positions include Asp-35–Asp-39, Ser-84–Leu-85, and Glu-115. The N6-AMP-lysine intermediate role is filled by Lys-117. NAD(+)-binding residues include Arg-138, Glu-172, Lys-288, and Lys-312. The Zn(2+) site is built by Cys-406, Cys-409, Cys-425, and Cys-430. One can recognise a BRCT domain in the interval Val-589–Phe-678.

It belongs to the NAD-dependent DNA ligase family. LigA subfamily. Mg(2+) is required as a cofactor. The cofactor is Mn(2+).

The catalysed reaction is NAD(+) + (deoxyribonucleotide)n-3'-hydroxyl + 5'-phospho-(deoxyribonucleotide)m = (deoxyribonucleotide)n+m + AMP + beta-nicotinamide D-nucleotide.. In terms of biological role, DNA ligase that catalyzes the formation of phosphodiester linkages between 5'-phosphoryl and 3'-hydroxyl groups in double-stranded DNA using NAD as a coenzyme and as the energy source for the reaction. It is essential for DNA replication and repair of damaged DNA. The chain is DNA ligase from Pseudothermotoga lettingae (strain ATCC BAA-301 / DSM 14385 / NBRC 107922 / TMO) (Thermotoga lettingae).